The primary structure comprises 422 residues: Adhesin YadA (422 aa).

An N-terminal signal peptide occupies residues 1–25 (MTKDFKISVSAALISALFSSPYAFA). The tract at residues 26–330 (NNDEVHFTAV…KKAIRESNQY (305 aa)) is surface exposed passenger domain. Residues 216 to 362 (EKTQENANKK…LASSAALNSL (147 aa)) adopt a coiled-coil conformation. Positions 331 to 369 (TDHKFHQLDNRLDKLDTRVDKGLASSAALNSLFQPYGVG) are outer membrane translocation of the passenger domain. The next 4 beta stranded transmembrane spans lie at 369–379 (GKVNFTAGVGG), 383–394 (SQALAIGSGYRV), 401–407 (KAGVAYA), and 411–422 (DVMYNASFNIEW). The translocator domain stretch occupies residues 370–422 (KVNFTAGVGGYRSSQALAIGSGYRVNESVALKAGVAYAGSSDVMYNASFNIEW).

It belongs to the autotransporter-2 (AT-2) (TC 1.B.40) family. As to quaternary structure, homotrimer.

It is found in the cell surface. The protein resides in the cell outer membrane. In terms of biological role, collagen-binding outer membrane protein forming a fibrillar matrix on the bacterial cell surface. Promotes initial attachment and invasion of eukaryotic cells. Also protects the bacteria by being responsible for agglutination, serum resistance, complement inactivation and phagocytosis resistance. In Yersinia enterocolitica, this protein is Adhesin YadA (yadA).